We begin with the raw amino-acid sequence, 126 residues long: UPF0235 protein C15orf40 homolog (126 aa).

Residues 1-32 form a disordered region; that stretch reads MPKKAGATSKGKNQTKEPETAPPAAGPVATDP. Serine 89 is modified (phosphoserine).

It belongs to the UPF0235 family.

The polypeptide is UPF0235 protein C15orf40 homolog (Mus musculus (Mouse)).